Here is a 448-residue protein sequence, read N- to C-terminus: Putative sodium-coupled neutral amino acid transporter 11 (448 aa).

The segment at Met-1–Ser-20 is disordered. Helical transmembrane passes span Val-22–Pro-42, Met-52–Val-72, Ile-94–Tyr-114, Phe-143–Ala-163, Leu-165–Val-185, Ala-200–Ile-220, Ile-246–Phe-266, Thr-286–Val-306, Ser-324–Tyr-344, Cys-346–Phe-366, and Met-389–Pro-409. N-linked (GlcNAc...) asparagine glycosylation is found at Asn-425, Asn-440, and Asn-444.

This sequence belongs to the amino acid/polyamine transporter 2 family.

The protein localises to the membrane. Putative sodium-dependent amino acid/proton antiporter. This Danio rerio (Zebrafish) protein is Putative sodium-coupled neutral amino acid transporter 11 (slc38a11).